Reading from the N-terminus, the 417-residue chain is Serine/threonine transporter SstT (417 aa).

8 helical membrane-spanning segments follow: residues Ile21 to Met41, Phe49 to Ile69, Ile83 to Phe103, Ala142 to Leu162, Ile193 to Gly213, Leu218 to Phe238, Ile291 to Leu311, and Leu331 to Ile351.

It belongs to the dicarboxylate/amino acid:cation symporter (DAACS) (TC 2.A.23) family.

The protein resides in the cell inner membrane. The enzyme catalyses L-serine(in) + Na(+)(in) = L-serine(out) + Na(+)(out). It catalyses the reaction L-threonine(in) + Na(+)(in) = L-threonine(out) + Na(+)(out). Its function is as follows. Involved in the import of serine and threonine into the cell, with the concomitant import of sodium (symport system). The protein is Serine/threonine transporter SstT of Proteus mirabilis (strain HI4320).